A 287-amino-acid polypeptide reads, in one-letter code: Phosphatidylserine decarboxylase proenzyme (287 aa).

Active-site charge relay system; for autoendoproteolytic cleavage activity residues include D90, H147, and S252. The active-site Schiff-base intermediate with substrate; via pyruvic acid; for decarboxylase activity is S252. S252 is subject to Pyruvic acid (Ser); by autocatalysis.

The protein belongs to the phosphatidylserine decarboxylase family. PSD-B subfamily. Prokaryotic type I sub-subfamily. Heterodimer of a large membrane-associated beta subunit and a small pyruvoyl-containing alpha subunit. The cofactor is pyruvate. In terms of processing, is synthesized initially as an inactive proenzyme. Formation of the active enzyme involves a self-maturation process in which the active site pyruvoyl group is generated from an internal serine residue via an autocatalytic post-translational modification. Two non-identical subunits are generated from the proenzyme in this reaction, and the pyruvate is formed at the N-terminus of the alpha chain, which is derived from the carboxyl end of the proenzyme. The autoendoproteolytic cleavage occurs by a canonical serine protease mechanism, in which the side chain hydroxyl group of the serine supplies its oxygen atom to form the C-terminus of the beta chain, while the remainder of the serine residue undergoes an oxidative deamination to produce ammonia and the pyruvoyl prosthetic group on the alpha chain. During this reaction, the Ser that is part of the protease active site of the proenzyme becomes the pyruvoyl prosthetic group, which constitutes an essential element of the active site of the mature decarboxylase.

The protein localises to the cell membrane. It carries out the reaction a 1,2-diacyl-sn-glycero-3-phospho-L-serine + H(+) = a 1,2-diacyl-sn-glycero-3-phosphoethanolamine + CO2. Its pathway is phospholipid metabolism; phosphatidylethanolamine biosynthesis; phosphatidylethanolamine from CDP-diacylglycerol: step 2/2. In terms of biological role, catalyzes the formation of phosphatidylethanolamine (PtdEtn) from phosphatidylserine (PtdSer). This is Phosphatidylserine decarboxylase proenzyme from Pseudomonas putida (strain ATCC 700007 / DSM 6899 / JCM 31910 / BCRC 17059 / LMG 24140 / F1).